The sequence spans 231 residues: Two-component response regulator ORR1 (231 aa).

Residues Arg-9–Pro-135 enclose the Response regulatory domain. 4-aspartylphosphate is present on Asp-68.

This sequence belongs to the ARR family. Type-A subfamily. Post-translationally, two-component system major event consists of a His-to-Asp phosphorelay between a sensor histidine kinase (HK) and a response regulator (RR). In plants, the His-to-Asp phosphorelay involves an additional intermediate named Histidine-containing phosphotransfer protein (HPt). This multistep phosphorelay consists of a His-Asp-His-Asp sequential transfer of a phosphate group between first a His and an Asp of the HK protein, followed by the transfer to a conserved His of the HPt protein and finally the transfer to an Asp in the receiver domain of the RR protein. In terms of tissue distribution, expressed in mature leaves and flowers, and at low levels in roots and shoots.

In terms of biological role, functions as a response regulator involved in His-to-Asp phosphorelay signal transduction system. Phosphorylation of the Asp residue in the receiver domain activates the ability of the protein to promote the transcription of target genes. Type-A response regulators seem to act as negative regulators of the cytokinin signaling. The sequence is that of Two-component response regulator ORR1 from Oryza sativa subsp. indica (Rice).